The following is a 420-amino-acid chain: Protein disulfide isomerase CRELD1 (420 aa).

Positions 1 to 29 (MAPWPPKGLVPAMLWGLSLFLNLPGPIWL) are cleaved as a signal peptide. Topologically, residues 30 to 362 (QPSPPPQSSP…GFFSEMTEDE (333 aa)) are extracellular. The CXXC motif lies at 46–49 (CHTC). Cys46 and Cys49 form a disulfide bridge. Asn79 is a glycosylation site (N-linked (GlcNAc...) asparagine). The EGF-like 1 domain maps to 153–193 (LPCPGGTERPCGGYGQCEGEGTRGGSGHCDCQAGYGGEACG). 3 disulfides stabilise this stretch: Cys155–Cys169, Cys163–Cys181, and Cys183–Cys192. Asn205 carries N-linked (GlcNAc...) asparagine glycosylation. FU repeat units lie at residues 208–256 (HLVC…GANC) and 268–315 (SYEC…EVCP). A CXXC motif is present at residues 278-281 (CLGC). 4 disulfide bridges follow: Cys278-Cys281, Cys309-Cys321, Cys314-Cys330, and Cys332-Cys343. The 40-residue stretch at 305-344 (DVDECETEVCPGENKQCENTEGGYRCICAEGYKQMEGICV) folds into the EGF-like 2; calcium-binding domain. A helical transmembrane segment spans residues 363–383 (LVVLQQMFFGIIICALATLAA). Lys384 is a topological domain (cytoplasmic). The chain crosses the membrane as a helical span at residues 385–405 (GDLVFTAIFIGAVAAMTGYWL). At 406 to 420 (SERSDRVLEGFIKGR) the chain is on the extracellular side.

This sequence belongs to the CRELD family. As to expression, highly expressed in fetal lung, liver, kidney, adult heart, brain and skeletal muscle. Weakly expressed in placenta, fetal brain, and adult lung, liver, kidney and pancreas.

It is found in the membrane. The enzyme catalyses Catalyzes the rearrangement of -S-S- bonds in proteins.. Functionally, protein disulfide isomerase. Promotes the localization of acetylcholine receptors (AChRs) to the plasma membrane. This Homo sapiens (Human) protein is Protein disulfide isomerase CRELD1 (CRELD1).